The sequence spans 418 residues: Glucose-1-phosphate adenylyltransferase (418 aa).

Alpha-D-glucose 1-phosphate-binding positions include Tyr107, Gly172, 187–188, and Ser205; that span reads EK.

The protein belongs to the bacterial/plant glucose-1-phosphate adenylyltransferase family. Homotetramer.

The catalysed reaction is alpha-D-glucose 1-phosphate + ATP + H(+) = ADP-alpha-D-glucose + diphosphate. It functions in the pathway glycan biosynthesis; glycogen biosynthesis. Its function is as follows. Involved in the biosynthesis of ADP-glucose, a building block required for the elongation reactions to produce glycogen. Catalyzes the reaction between ATP and alpha-D-glucose 1-phosphate (G1P) to produce pyrophosphate and ADP-Glc. The sequence is that of Glucose-1-phosphate adenylyltransferase from Gemmatimonas aurantiaca (strain DSM 14586 / JCM 11422 / NBRC 100505 / T-27).